A 440-amino-acid polypeptide reads, in one-letter code: L-seryl-tRNA(Sec) selenium transferase (440 aa).

At K282 the chain carries N6-(pyridoxal phosphate)lysine.

This sequence belongs to the SelA family. Requires pyridoxal 5'-phosphate as cofactor.

The protein resides in the cytoplasm. The catalysed reaction is L-seryl-tRNA(Sec) + selenophosphate + H(+) = L-selenocysteinyl-tRNA(Sec) + phosphate. It participates in aminoacyl-tRNA biosynthesis; selenocysteinyl-tRNA(Sec) biosynthesis; selenocysteinyl-tRNA(Sec) from L-seryl-tRNA(Sec) (bacterial route): step 1/1. In terms of biological role, converts seryl-tRNA(Sec) to selenocysteinyl-tRNA(Sec) required for selenoprotein biosynthesis. The polypeptide is L-seryl-tRNA(Sec) selenium transferase (Campylobacter jejuni subsp. doylei (strain ATCC BAA-1458 / RM4099 / 269.97)).